Reading from the N-terminus, the 149-residue chain is Large ribosomal subunit protein uL13 (149 aa).

The protein belongs to the universal ribosomal protein uL13 family. In terms of assembly, part of the 50S ribosomal subunit.

Its function is as follows. This protein is one of the early assembly proteins of the 50S ribosomal subunit, although it is not seen to bind rRNA by itself. It is important during the early stages of 50S assembly. This chain is Large ribosomal subunit protein uL13, found in Gemmatimonas aurantiaca (strain DSM 14586 / JCM 11422 / NBRC 100505 / T-27).